The chain runs to 477 residues: Bifunctional protein HldE (477 aa).

Residues 1–318 form a ribokinase region; it reads MKVTLPEFER…ENAVRGRADT (318 aa). An N6-acetyllysine modification is found at K179. Residue 195 to 198 coordinates ATP; sequence NLSE. D264 is an active-site residue. The cytidylyltransferase stretch occupies residues 344 to 477; that stretch reads MTNGVFDILH…IKKIQLDKKG (134 aa).

In the N-terminal section; belongs to the carbohydrate kinase PfkB family. The protein in the C-terminal section; belongs to the cytidylyltransferase family. Homodimer.

It carries out the reaction D-glycero-beta-D-manno-heptose 7-phosphate + ATP = D-glycero-beta-D-manno-heptose 1,7-bisphosphate + ADP + H(+). The enzyme catalyses D-glycero-beta-D-manno-heptose 1-phosphate + ATP + H(+) = ADP-D-glycero-beta-D-manno-heptose + diphosphate. It functions in the pathway nucleotide-sugar biosynthesis; ADP-L-glycero-beta-D-manno-heptose biosynthesis; ADP-L-glycero-beta-D-manno-heptose from D-glycero-beta-D-manno-heptose 7-phosphate: step 1/4. Its pathway is nucleotide-sugar biosynthesis; ADP-L-glycero-beta-D-manno-heptose biosynthesis; ADP-L-glycero-beta-D-manno-heptose from D-glycero-beta-D-manno-heptose 7-phosphate: step 3/4. Functionally, catalyzes the phosphorylation of D-glycero-D-manno-heptose 7-phosphate at the C-1 position to selectively form D-glycero-beta-D-manno-heptose-1,7-bisphosphate. In terms of biological role, catalyzes the ADP transfer from ATP to D-glycero-beta-D-manno-heptose 1-phosphate, yielding ADP-D-glycero-beta-D-manno-heptose. The protein is Bifunctional protein HldE of Escherichia coli O81 (strain ED1a).